We begin with the raw amino-acid sequence, 260 residues long: NAD kinase (260 aa).

D54 acts as the Proton acceptor in catalysis. NAD(+)-binding positions include 54–55 (DG), 123–124 (ND), R150, D152, and 163–168 (TAYSLS).

Belongs to the NAD kinase family. The cofactor is a divalent metal cation.

The protein resides in the cytoplasm. It catalyses the reaction NAD(+) + ATP = ADP + NADP(+) + H(+). Functionally, involved in the regulation of the intracellular balance of NAD and NADP, and is a key enzyme in the biosynthesis of NADP. Catalyzes specifically the phosphorylation on 2'-hydroxyl of the adenosine moiety of NAD to yield NADP. The polypeptide is NAD kinase (Caldicellulosiruptor saccharolyticus (strain ATCC 43494 / DSM 8903 / Tp8T 6331)).